The following is a 677-amino-acid chain: Methionine--tRNA ligase (677 aa).

Residues 15-25 carry the 'HIGH' region motif; sequence PYANGSIHLGH. Positions 146, 149, 159, and 162 each coordinate Zn(2+). The 'KMSKS' region motif lies at 333–337; it reads KMSKS. Residue Lys336 participates in ATP binding. One can recognise a tRNA-binding domain in the interval 575-677; it reads DFAKVDLRVA…EGAKPGQQVK (103 aa).

Belongs to the class-I aminoacyl-tRNA synthetase family. MetG type 1 subfamily. As to quaternary structure, homodimer. It depends on Zn(2+) as a cofactor.

It localises to the cytoplasm. It carries out the reaction tRNA(Met) + L-methionine + ATP = L-methionyl-tRNA(Met) + AMP + diphosphate. Functionally, is required not only for elongation of protein synthesis but also for the initiation of all mRNA translation through initiator tRNA(fMet) aminoacylation. This chain is Methionine--tRNA ligase, found in Enterobacter sp. (strain 638).